An 83-amino-acid polypeptide reads, in one-letter code: Apolipoprotein C-I, basic form (83 aa).

The first 26 residues, 1 to 26, serve as a signal peptide directing secretion; that stretch reads MRLFLSLPVLVVVLSMVLEGPAPAQG.

This sequence belongs to the apolipoprotein C1 family.

It localises to the secreted. Its function is as follows. Inhibitor of lipoprotein binding to the low density lipoprotein (LDL) receptor, LDL receptor-related protein, and very low density lipoprotein (VLDL) receptor. Associates with high density lipoproteins (HDL) and the triacylglycerol-rich lipoproteins in the plasma and makes up about 10% of the protein of the VLDL and 2% of that of HDL. Appears to interfere directly with fatty acid uptake and is also the major plasma inhibitor of cholesteryl ester transfer protein (CETP). Binds free fatty acids and reduces their intracellular esterification. Modulates the interaction of APOE with beta-migrating VLDL and inhibits binding of beta-VLDL to the LDL receptor-related protein. This is Apolipoprotein C-I, basic form (APOC1B) from Colobus guereza (Mantled guereza).